The following is a 115-amino-acid chain: Translation initiation factor 1A 2 (115 aa).

A disordered region spans residues 1 to 34 (MANYRSTIRHRNSGSRKSVSGDTHEVTRVRTPQK). The segment covering 22 to 34 (DTHEVTRVRTPQK) has biased composition (basic and acidic residues). The S1-like domain maps to 27–101 (TRVRTPQKDR…SKADVTWKYT (75 aa)).

This sequence belongs to the eIF-1A family.

Functionally, seems to be required for maximal rate of protein biosynthesis. Enhances ribosome dissociation into subunits and stabilizes the binding of the initiator Met-tRNA(I) to 40 S ribosomal subunits. This chain is Translation initiation factor 1A 2, found in Methanosarcina barkeri (strain Fusaro / DSM 804).